A 179-amino-acid polypeptide reads, in one-letter code: Large ribosomal subunit protein uL5 (179 aa).

It belongs to the universal ribosomal protein uL5 family. Part of the 50S ribosomal subunit; part of the 5S rRNA/L5/L18/L25 subcomplex. Contacts the 5S rRNA and the P site tRNA. Forms a bridge to the 30S subunit in the 70S ribosome.

Its function is as follows. This is one of the proteins that bind and probably mediate the attachment of the 5S RNA into the large ribosomal subunit, where it forms part of the central protuberance. In the 70S ribosome it contacts protein S13 of the 30S subunit (bridge B1b), connecting the 2 subunits; this bridge is implicated in subunit movement. Contacts the P site tRNA; the 5S rRNA and some of its associated proteins might help stabilize positioning of ribosome-bound tRNAs. The polypeptide is Large ribosomal subunit protein uL5 (Prochlorococcus marinus (strain MIT 9211)).